The chain runs to 360 residues: Phospho-N-acetylmuramoyl-pentapeptide-transferase (360 aa).

The next 10 membrane-spanning stretches (helical) occupy residues Arg25–Ile45, Thr73–Leu93, Tyr97–Tyr117, Tyr134–Thr154, Leu168–Ser188, Gly199–Ser219, Ala236–Phe256, Val263–Ile283, Val288–Val308, and Val338–Lys358.

The protein belongs to the glycosyltransferase 4 family. MraY subfamily. Requires Mg(2+) as cofactor.

The protein resides in the cell inner membrane. The catalysed reaction is UDP-N-acetyl-alpha-D-muramoyl-L-alanyl-gamma-D-glutamyl-meso-2,6-diaminopimeloyl-D-alanyl-D-alanine + di-trans,octa-cis-undecaprenyl phosphate = di-trans,octa-cis-undecaprenyl diphospho-N-acetyl-alpha-D-muramoyl-L-alanyl-D-glutamyl-meso-2,6-diaminopimeloyl-D-alanyl-D-alanine + UMP. The protein operates within cell wall biogenesis; peptidoglycan biosynthesis. Its function is as follows. Catalyzes the initial step of the lipid cycle reactions in the biosynthesis of the cell wall peptidoglycan: transfers peptidoglycan precursor phospho-MurNAc-pentapeptide from UDP-MurNAc-pentapeptide onto the lipid carrier undecaprenyl phosphate, yielding undecaprenyl-pyrophosphoryl-MurNAc-pentapeptide, known as lipid I. In Pseudomonas entomophila (strain L48), this protein is Phospho-N-acetylmuramoyl-pentapeptide-transferase.